The chain runs to 360 residues: Aminomethyltransferase (360 aa).

The protein belongs to the GcvT family. As to quaternary structure, the glycine cleavage system is composed of four proteins: P, T, L and H.

The catalysed reaction is N(6)-[(R)-S(8)-aminomethyldihydrolipoyl]-L-lysyl-[protein] + (6S)-5,6,7,8-tetrahydrofolate = N(6)-[(R)-dihydrolipoyl]-L-lysyl-[protein] + (6R)-5,10-methylene-5,6,7,8-tetrahydrofolate + NH4(+). The glycine cleavage system catalyzes the degradation of glycine. The sequence is that of Aminomethyltransferase from Legionella pneumophila (strain Lens).